The primary structure comprises 360 residues: Arginase, non-hepatic 1 (360 aa).

Mn(2+) is bound by residues H122, D145, H147, and D149. Residues 147 to 151, 158 to 160, and D204 each bind substrate; these read HADIN and SGN. Mn(2+) is bound by residues D253 and D255. 2 residues coordinate substrate: T267 and E298.

The protein belongs to the arginase family. Homotrimer. It depends on Mn(2+) as a cofactor. As to expression, expressed at differing tadpole stages in tail, intestine, hindlimb and trunk region. Most abundant in tadpole tail.

It carries out the reaction L-arginine + H2O = urea + L-ornithine. The protein operates within nitrogen metabolism; urea cycle; L-ornithine and urea from L-arginine: step 1/1. Functionally, as well as its role in the urea cycle, may be involved in tissue remodeling. In Xenopus laevis (African clawed frog), this protein is Arginase, non-hepatic 1 (arg2-a).